The primary structure comprises 160 residues: Deoxyuridine 5'-triphosphate nucleotidohydrolase (160 aa).

Substrate is bound by residues 76–78 (RSG), Asn89, and 93–95 (TID). Residues 139–149 (HTLSDTERGED) show a composition bias toward basic and acidic residues. Residues 139 to 160 (HTLSDTERGEDGFGSTGHGSHQ) are disordered. Over residues 150–160 (GFGSTGHGSHQ) the composition is skewed to gly residues.

Belongs to the dUTPase family. Mg(2+) is required as a cofactor.

It catalyses the reaction dUTP + H2O = dUMP + diphosphate + H(+). It participates in pyrimidine metabolism; dUMP biosynthesis; dUMP from dCTP (dUTP route): step 2/2. In terms of biological role, this enzyme is involved in nucleotide metabolism: it produces dUMP, the immediate precursor of thymidine nucleotides and it decreases the intracellular concentration of dUTP so that uracil cannot be incorporated into DNA. The sequence is that of Deoxyuridine 5'-triphosphate nucleotidohydrolase from Beijerinckia indica subsp. indica (strain ATCC 9039 / DSM 1715 / NCIMB 8712).